Here is a 319-residue protein sequence, read N- to C-terminus: Olfactory receptor 10Q1 (319 aa).

The Extracellular segment spans residues Met1–Val29. Asn9 is a glycosylation site (N-linked (GlcNAc...) asparagine). A helical membrane pass occupies residues Leu30–Ile50. Over Trp51–Thr58 the chain is Cytoplasmic. A helical membrane pass occupies residues Leu59–Thr79. Residues Val80 to Ala103 lie on the Extracellular side of the membrane. Cys101 and Cys194 are joined by a disulfide. Residues Gln104–Tyr124 form a helical membrane-spanning segment. Residues Asp125–Glu143 are Cytoplasmic-facing. The chain crosses the membrane as a helical span at residues Leu144 to Thr164. The Extracellular portion of the chain corresponds to Ala165–Ala202. The helical transmembrane segment at Val203–Ser222 threads the bilayer. Residues Tyr223–Ala242 are Cytoplasmic-facing. A helical transmembrane segment spans residues Phe243–Val263. Over Tyr264–Asp276 the chain is Extracellular. Residues Ser277 to Leu297 form a helical membrane-spanning segment. The Cytoplasmic portion of the chain corresponds to Arg298–Asn319.

This sequence belongs to the G-protein coupled receptor 1 family.

It is found in the cell membrane. In terms of biological role, odorant receptor. The protein is Olfactory receptor 10Q1 (OR10Q1) of Homo sapiens (Human).